Reading from the N-terminus, the 328-residue chain is Thiamine-monophosphate kinase (328 aa).

Asp30, Thr45, Thr46, and Asp47 together coordinate Mg(2+). His54 serves as a coordination point for substrate. Positions 75 and 122 each coordinate Mg(2+). ATP-binding positions include 121 to 122 (GD) and Arg146. Asp211 contacts Mg(2+). Residue Ser213 participates in ATP binding. Residue Asp214 participates in Mg(2+) binding. Substrate is bound by residues Glu262 and Phe321.

Belongs to the thiamine-monophosphate kinase family.

It catalyses the reaction thiamine phosphate + ATP = thiamine diphosphate + ADP. Its pathway is cofactor biosynthesis; thiamine diphosphate biosynthesis; thiamine diphosphate from thiamine phosphate: step 1/1. Functionally, catalyzes the ATP-dependent phosphorylation of thiamine-monophosphate (TMP) to form thiamine-pyrophosphate (TPP), the active form of vitamin B1. This Haemophilus influenzae (strain ATCC 51907 / DSM 11121 / KW20 / Rd) protein is Thiamine-monophosphate kinase.